A 122-amino-acid chain; its full sequence is Large ribosomal subunit protein uL14 (122 aa).

This sequence belongs to the universal ribosomal protein uL14 family. Part of the 50S ribosomal subunit. Forms a cluster with proteins L3 and L19. In the 70S ribosome, L14 and L19 interact and together make contacts with the 16S rRNA in bridges B5 and B8.

In terms of biological role, binds to 23S rRNA. Forms part of two intersubunit bridges in the 70S ribosome. In Rickettsia massiliae (strain Mtu5), this protein is Large ribosomal subunit protein uL14.